The following is a 1408-amino-acid chain: DNA-directed RNA polymerase subunit beta' (1408 aa).

Cys70, Cys72, Cys85, and Cys88 together coordinate Zn(2+). 3 residues coordinate Mg(2+): Asp460, Asp462, and Asp464. Positions 814, 887, 894, and 897 each coordinate Zn(2+).

It belongs to the RNA polymerase beta' chain family. As to quaternary structure, the RNAP catalytic core consists of 2 alpha, 1 beta, 1 beta' and 1 omega subunit. When a sigma factor is associated with the core the holoenzyme is formed, which can initiate transcription. Requires Mg(2+) as cofactor. The cofactor is Zn(2+).

The enzyme catalyses RNA(n) + a ribonucleoside 5'-triphosphate = RNA(n+1) + diphosphate. Its function is as follows. DNA-dependent RNA polymerase catalyzes the transcription of DNA into RNA using the four ribonucleoside triphosphates as substrates. The sequence is that of DNA-directed RNA polymerase subunit beta' from Hydrogenovibrio crunogenus (strain DSM 25203 / XCL-2) (Thiomicrospira crunogena).